The chain runs to 135 residues: uncharacterized protein (135 aa).

This is an uncharacterized protein from Homo sapiens (Human).